A 347-amino-acid chain; its full sequence is Single-pass membrane and coiled-coil domain-containing protein 2 (347 aa).

The tract at residues 1 to 89 (MMSLQLGTAG…PPSKPDEQEV (89 aa)) is disordered. Basic and acidic residues-rich tracts occupy residues 10–21 (GKERQLAEKSRD), 36–51 (EMDH…DKPS), and 60–86 (YKMD…KPDE). Residues 139 to 238 (DWLERINNII…MNVLNSKLEM (100 aa)) are a coiled coil. S178 is subject to Phosphoserine. The segment at 243–274 (GSDADSHNSEDVDTEQEEPLVPEASPSLSASP) is disordered. Residues 253 to 262 (DVDTEQEEPL) show a composition bias toward acidic residues. Over residues 263–273 (VPEASPSLSAS) the composition is skewed to low complexity. Residues 288 to 308 (LFVIVYVVTITGLSCYILFVD) form a helical membrane-spanning segment.

The protein localises to the membrane. In Mus musculus (Mouse), this protein is Single-pass membrane and coiled-coil domain-containing protein 2 (Smco2).